A 284-amino-acid chain; its full sequence is uncharacterized protein (284 aa).

One can recognise an AB hydrolase-1 domain in the interval 25–123; that stretch reads PILVMHGGHS…NTLTLQSAVT (99 aa). Residue S96 is part of the active site.

This sequence belongs to the AB hydrolase superfamily.

This is an uncharacterized protein from Bacillus subtilis (strain 168).